The sequence spans 1442 residues: DNA polymerase III PolC-type (1442 aa).

The 157-residue stretch at 426 to 582 (YVVFDVETTG…YDTEATAYIF (157 aa)) folds into the Exonuclease domain.

Belongs to the DNA polymerase type-C family. PolC subfamily.

Its subcellular location is the cytoplasm. The enzyme catalyses DNA(n) + a 2'-deoxyribonucleoside 5'-triphosphate = DNA(n+1) + diphosphate. Its function is as follows. Required for replicative DNA synthesis. This DNA polymerase also exhibits 3' to 5' exonuclease activity. In Staphylococcus epidermidis (strain ATCC 12228 / FDA PCI 1200), this protein is DNA polymerase III PolC-type.